The following is a 114-amino-acid chain: Putative pterin-4-alpha-carbinolamine dehydratase (114 aa).

The protein belongs to the pterin-4-alpha-carbinolamine dehydratase family.

The catalysed reaction is (4aS,6R)-4a-hydroxy-L-erythro-5,6,7,8-tetrahydrobiopterin = (6R)-L-erythro-6,7-dihydrobiopterin + H2O. This chain is Putative pterin-4-alpha-carbinolamine dehydratase, found in Methylococcus capsulatus (strain ATCC 33009 / NCIMB 11132 / Bath).